Reading from the N-terminus, the 61-residue chain is Sec-independent protein translocase protein TatA (61 aa).

The helical transmembrane segment at 1–21 threads the bilayer; it reads MFGIGMPELIVILVIVLVVFG.

It belongs to the TatA/E family. In terms of assembly, the Tat system comprises two distinct complexes: a TatABC complex, containing multiple copies of TatA, TatB and TatC subunits, and a separate TatA complex, containing only TatA subunits. Substrates initially bind to the TatABC complex, which probably triggers association of the separate TatA complex to form the active translocon.

The protein resides in the cell inner membrane. Functionally, part of the twin-arginine translocation (Tat) system that transports large folded proteins containing a characteristic twin-arginine motif in their signal peptide across membranes. TatA could form the protein-conducting channel of the Tat system. This Geobacter metallireducens (strain ATCC 53774 / DSM 7210 / GS-15) protein is Sec-independent protein translocase protein TatA.